A 425-amino-acid chain; its full sequence is Succinyl-diaminopimelate desuccinylase (425 aa).

A Zn(2+)-binding site is contributed by His96. Asp98 is a catalytic residue. A Zn(2+)-binding site is contributed by Asp129. The active-site Proton acceptor is Glu163. Zn(2+) is bound by residues Glu164, Glu192, and His378.

The protein belongs to the peptidase M20A family. DapE subfamily. In terms of assembly, homodimer. Requires Zn(2+) as cofactor. The cofactor is Co(2+).

The catalysed reaction is N-succinyl-(2S,6S)-2,6-diaminopimelate + H2O = (2S,6S)-2,6-diaminopimelate + succinate. It participates in amino-acid biosynthesis; L-lysine biosynthesis via DAP pathway; LL-2,6-diaminopimelate from (S)-tetrahydrodipicolinate (succinylase route): step 3/3. Functionally, catalyzes the hydrolysis of N-succinyl-L,L-diaminopimelic acid (SDAP), forming succinate and LL-2,6-diaminopimelate (DAP), an intermediate involved in the bacterial biosynthesis of lysine and meso-diaminopimelic acid, an essential component of bacterial cell walls. In Polaromonas sp. (strain JS666 / ATCC BAA-500), this protein is Succinyl-diaminopimelate desuccinylase.